Reading from the N-terminus, the 581-residue chain is Pentatricopeptide repeat-containing protein At3g56550 (581 aa).

PPR repeat units follow at residues 70–104 (STSD…SVSR), 106–140 (DLFT…GFLD), 141–171 (DAIV…MPVR), 172–206 (DLVS…GVCG), 207–241 (DSYT…RCES), 242–272 (CVFV…MRKR), 273–307 (DVLT…GVRP), 308–338 (NAIT…MSSQ), and 344–378 (NVKH…EDPV). The type E motif stretch occupies residues 379-454 (LWRTLLGSCK…VPGWSWIEIG (76 aa)). The segment at 455-485 (DQVHKFVVDDKMHPESAVIYSELGEVINRAI) is type E(+) motif. Residues 486–581 (LAGYKPEDSN…DGICSCNDYW (96 aa)) are type DYW motif.

This sequence belongs to the PPR family. PCMP-H subfamily.

This Arabidopsis thaliana (Mouse-ear cress) protein is Pentatricopeptide repeat-containing protein At3g56550 (PCMP-H80).